A 139-amino-acid polypeptide reads, in one-letter code: Holo-[acyl-carrier-protein] synthase (139 aa).

Mg(2+)-binding residues include D9 and E63.

Belongs to the P-Pant transferase superfamily. AcpS family. Requires Mg(2+) as cofactor.

It is found in the cytoplasm. The catalysed reaction is apo-[ACP] + CoA = holo-[ACP] + adenosine 3',5'-bisphosphate + H(+). Functionally, transfers the 4'-phosphopantetheine moiety from coenzyme A to a Ser of acyl-carrier-protein. The chain is Holo-[acyl-carrier-protein] synthase from Wigglesworthia glossinidia brevipalpis.